A 98-amino-acid polypeptide reads, in one-letter code: YcgL domain-containing protein CJA_2437 (98 aa).

Residues 3–87 (IIAEIYRSPK…RDLVDAEAKR (85 aa)) form the YcgL domain.

The protein is YcgL domain-containing protein CJA_2437 of Cellvibrio japonicus (strain Ueda107) (Pseudomonas fluorescens subsp. cellulosa).